The sequence spans 148 residues: Macrodomain Ter protein (148 aa).

Belongs to the MatP family. Homodimer.

It localises to the cytoplasm. In terms of biological role, required for spatial organization of the terminus region of the chromosome (Ter macrodomain) during the cell cycle. Prevents early segregation of duplicated Ter macrodomains during cell division. Binds specifically to matS, which is a 13 bp signature motif repeated within the Ter macrodomain. This chain is Macrodomain Ter protein, found in Pasteurella multocida (strain Pm70).